The sequence spans 304 residues: Porphobilinogen deaminase (304 aa).

Cys-240 is modified (S-(dipyrrolylmethanemethyl)cysteine).

The protein belongs to the HMBS family. In terms of assembly, monomer. Requires dipyrromethane as cofactor.

The enzyme catalyses 4 porphobilinogen + H2O = hydroxymethylbilane + 4 NH4(+). It functions in the pathway porphyrin-containing compound metabolism; protoporphyrin-IX biosynthesis; coproporphyrinogen-III from 5-aminolevulinate: step 2/4. Functionally, tetrapolymerization of the monopyrrole PBG into the hydroxymethylbilane pre-uroporphyrinogen in several discrete steps. In Xanthomonas oryzae pv. oryzae (strain MAFF 311018), this protein is Porphobilinogen deaminase.